Reading from the N-terminus, the 2197-residue chain is uncharacterized protein (2197 aa).

An N-acetylserine modification is found at Ser-2. The stretch at 2159–2195 (TIPFLAELLEDVELSVKSLAQDIIKQMEEMSGESLAE) is one HEAT repeat.

This sequence belongs to the HEATR1/UTP10 family.

It localises to the nucleus. Its subcellular location is the nucleolus. Involved in nucleolar processing of pre-18S ribosomal RNA. Involved in ribosome biosynthesis. This is an uncharacterized protein from Arabidopsis thaliana (Mouse-ear cress).